The chain runs to 181 residues: Probable mitochondrial import inner membrane translocase subunit tim-17B.1 (181 aa).

Helical transmembrane passes span 17 to 37 (IGSAFAMGLVGGSIFQAFGGY), 61 to 81 (GVQFAAWGGMFSTIDCCLVAI), and 109 to 129 (VMAGSAILGSVILAMIEGVGL). Residues 137-181 (AMMDPTQPPPEALDDPRSLGQKSQAEPGLDQTRPFGIPTGLPNLS) are disordered.

Belongs to the Tim17/Tim22/Tim23 family.

It is found in the mitochondrion inner membrane. Essential component of the TIM23 complex, a complex that mediates the translocation of transit peptide-containing proteins across the mitochondrial inner membrane. The sequence is that of Probable mitochondrial import inner membrane translocase subunit tim-17B.1 from Caenorhabditis elegans.